The primary structure comprises 156 residues: ATP synthase subunit b (156 aa).

Residues 11-31 (AIAFAVFVWFCMKYVWPPLLA) form a helical membrane-spanning segment.

It belongs to the ATPase B chain family. In terms of assembly, F-type ATPases have 2 components, F(1) - the catalytic core - and F(0) - the membrane proton channel. F(1) has five subunits: alpha(3), beta(3), gamma(1), delta(1), epsilon(1). F(0) has three main subunits: a(1), b(2) and c(10-14). The alpha and beta chains form an alternating ring which encloses part of the gamma chain. F(1) is attached to F(0) by a central stalk formed by the gamma and epsilon chains, while a peripheral stalk is formed by the delta and b chains.

It is found in the cell inner membrane. Functionally, f(1)F(0) ATP synthase produces ATP from ADP in the presence of a proton or sodium gradient. F-type ATPases consist of two structural domains, F(1) containing the extramembraneous catalytic core and F(0) containing the membrane proton channel, linked together by a central stalk and a peripheral stalk. During catalysis, ATP synthesis in the catalytic domain of F(1) is coupled via a rotary mechanism of the central stalk subunits to proton translocation. In terms of biological role, component of the F(0) channel, it forms part of the peripheral stalk, linking F(1) to F(0). This is ATP synthase subunit b from Psychromonas ingrahamii (strain DSM 17664 / CCUG 51855 / 37).